The primary structure comprises 405 residues: Lariat debranching enzyme (405 aa).

Residues Cys11, His13, Asp40, and Asn85 each contribute to the a divalent metal cation site. The tract at residues 125-159 (SGIWKEWDFNKQRPDWNDLENNNWKANIRNLYHVR) is lariat recognition loop. Residues His179, His231, and His233 each coordinate a divalent metal cation. The disordered stretch occupies residues 242–277 (HNKRSHEPPNKSTSKTKKNNNEIDLDLSSDEDERSG). A compositionally biased stretch (acidic residues) spans 264 to 274 (IDLDLSSDEDE). Ser269 carries the post-translational modification Phosphoserine.

This sequence belongs to the lariat debranching enzyme family. Fe(2+) serves as cofactor. It depends on Zn(2+) as a cofactor. Mn(2+) is required as a cofactor.

It localises to the nucleus. The protein resides in the cytoplasm. Active in presence of diverse metals including Fe(2+), Zn(2+) and Mn(2+). Binds two metal cations in two adjacent alpha and beta metal-binding pockets. The activity is the highest with Fe(2+) bound to the 2 metal-binding sites. Activity is low with Zn(2+) and Mn(2+). Its function is as follows. Cleaves the 2'-5' phosphodiester linkage at the branch point of lariat intron pre-mRNAs after splicing and converts them into linear molecules that are subsequently degraded, thereby facilitating ribonucleotide turnover. It also participates in Ty1 retrovirus-like transposition via an RNA lariat intermediate in cDNA synthesis. This chain is Lariat debranching enzyme (DBR1), found in Saccharomyces cerevisiae (strain ATCC 204508 / S288c) (Baker's yeast).